We begin with the raw amino-acid sequence, 390 residues long: UPF0496 protein At1g20180 (390 aa).

The next 2 membrane-spanning stretches (helical) occupy residues 228–248 and 250–270; these read LGGY…LIIA and HSIL…FCLL.

The protein belongs to the UPF0496 family.

It localises to the membrane. The protein is UPF0496 protein At1g20180 of Arabidopsis thaliana (Mouse-ear cress).